The following is a 264-amino-acid chain: Protein OXIDATIVE STRESS 3 LIKE 1 (264 aa).

Disordered stretches follow at residues 1 to 76 and 178 to 225; these read MDCV…GPLE and TGEG…QGSF. Residues 29–43 are compositionally biased toward low complexity; that stretch reads PSDSSSSPSSSASSS. A compositionally biased stretch (basic and acidic residues) spans 47-56; sequence NSDDGEKSSE. Over residues 57–67 the composition is skewed to acidic residues; sequence DGGDDAGENEV. Residues 179-201 show a composition bias toward low complexity; it reads GEGSSSGGDSSPGSSPTTSGSPP. The span at 203 to 212 shows a compositional bias: basic residues; that stretch reads QLHHHQHQMK.

The protein localises to the nucleus. In terms of biological role, promotes slightly the tolerance to zinc (Zn) and to oxidizing chemicals (e.g. diamide). The chain is Protein OXIDATIVE STRESS 3 LIKE 1 from Arabidopsis thaliana (Mouse-ear cress).